The following is a 227-amino-acid chain: Lectin (227 aa).

The signal sequence occupies residues 1 to 28 (MTMTSTTTKAMAMAAAVLAAAAVAATNA). Gln29 is modified (pyrrolidone carboxylic acid). 4 consecutive Chitin-binding type-1 domains span residues 29 to 70 (QTCG…ACCS), 71 to 113 (SQRC…PCRA), 114 to 156 (DIKC…ACCP), and 157 to 199 (EKRC…GCYK). 16 disulfides stabilise this stretch: Cys31/Cys46, Cys40/Cys52, Cys45/Cys59, Cys63/Cys68, Cys74/Cys89, Cys83/Cys95, Cys88/Cys102, Cys106/Cys111, Cys117/Cys132, Cys126/Cys138, Cys131/Cys145, Cys149/Cys154, Cys160/Cys175, Cys169/Cys181, Cys174/Cys188, and Cys192/Cys197. Residue 38–40 (MIC) participates in substrate binding. 90 to 101 (SQYGYCGFGSEY) lines the substrate pocket. Residue 142–143 (SE) participates in substrate binding. Positions 202–227 (DGMAAILANNQSVSFEGIIESVAELV) are excised as a propeptide. N-linked (GlcNAc...) asparagine glycosylation occurs at Asn211.

As to expression, confined to root caps, several cell layers at the periphery of the coleorhiza and radicle, and in all cell layers of the coleoptile.

Its function is as follows. N-acetyl-D-glucosamine binding lectin. The chain is Lectin from Oryza sativa subsp. japonica (Rice).